Here is a 208-residue protein sequence, read N- to C-terminus: Probable nicotinate-nucleotide adenylyltransferase (208 aa).

This sequence belongs to the NadD family.

The catalysed reaction is nicotinate beta-D-ribonucleotide + ATP + H(+) = deamido-NAD(+) + diphosphate. It functions in the pathway cofactor biosynthesis; NAD(+) biosynthesis; deamido-NAD(+) from nicotinate D-ribonucleotide: step 1/1. In terms of biological role, catalyzes the reversible adenylation of nicotinate mononucleotide (NaMN) to nicotinic acid adenine dinucleotide (NaAD). This Nostoc sp. (strain PCC 7120 / SAG 25.82 / UTEX 2576) protein is Probable nicotinate-nucleotide adenylyltransferase.